Consider the following 496-residue polypeptide: Glutamate--tRNA ligase (496 aa).

Residues 10 to 20 (PSPTGPLHIGG) carry the 'HIGH' region motif. Positions 251-255 (KMSKR) match the 'KMSKS' region motif. K254 contacts ATP.

It belongs to the class-I aminoacyl-tRNA synthetase family. Glutamate--tRNA ligase type 1 subfamily. As to quaternary structure, monomer.

Its subcellular location is the cytoplasm. It catalyses the reaction tRNA(Glu) + L-glutamate + ATP = L-glutamyl-tRNA(Glu) + AMP + diphosphate. Its function is as follows. Catalyzes the attachment of glutamate to tRNA(Glu) in a two-step reaction: glutamate is first activated by ATP to form Glu-AMP and then transferred to the acceptor end of tRNA(Glu). The polypeptide is Glutamate--tRNA ligase (Heliobacterium modesticaldum (strain ATCC 51547 / Ice1)).